Here is a 430-residue protein sequence, read N- to C-terminus: Adenylosuccinate synthetase (430 aa).

Residues 13 to 19 (GDEGKGK) and 41 to 43 (GHT) contribute to the GTP site. D14 functions as the Proton acceptor in the catalytic mechanism. D14 and G41 together coordinate Mg(2+). Residues 14 to 17 (DEGK), 39 to 42 (NAGH), T130, R144, Q225, T240, and R304 each bind IMP. H42 acts as the Proton donor in catalysis. 300–306 (STTGRAR) is a binding site for substrate. GTP-binding positions include R306, 332–334 (KLD), and 414–416 (STG).

The protein belongs to the adenylosuccinate synthetase family. As to quaternary structure, homodimer. Requires Mg(2+) as cofactor.

It is found in the cytoplasm. It catalyses the reaction IMP + L-aspartate + GTP = N(6)-(1,2-dicarboxyethyl)-AMP + GDP + phosphate + 2 H(+). It functions in the pathway purine metabolism; AMP biosynthesis via de novo pathway; AMP from IMP: step 1/2. Plays an important role in the de novo pathway of purine nucleotide biosynthesis. Catalyzes the first committed step in the biosynthesis of AMP from IMP. In Pseudomonas entomophila (strain L48), this protein is Adenylosuccinate synthetase.